The primary structure comprises 129 residues: Small ribosomal subunit protein uS11 (129 aa).

It belongs to the universal ribosomal protein uS11 family. Part of the 30S ribosomal subunit. Interacts with proteins S7 and S18. Binds to IF-3.

In terms of biological role, located on the platform of the 30S subunit, it bridges several disparate RNA helices of the 16S rRNA. Forms part of the Shine-Dalgarno cleft in the 70S ribosome. This is Small ribosomal subunit protein uS11 from Yersinia pseudotuberculosis serotype O:1b (strain IP 31758).